The sequence spans 497 residues: Xylooligosaccharide oxidase (497 aa).

A signal peptide spans 1 to 16 (MHLLPLTVSATAVVSA). Cys30 and Cys79 form a disulfide bridge. 2 N-linked (GlcNAc...) asparagine glycosylation sites follow: Asn42 and Asn117. The region spanning 57-230 (LPYTPAAIAK…ASFRFKTFAA (174 aa)) is the FAD-binding PCMH-type domain. A cross-link (6-(S-cysteinyl)-8alpha-(pros-histidyl)-FAD (His-Cys)) is located at residues 94 to 155 (HSYASFGLGG…GKRAFSHGTC (62 aa)). Thr154 contributes to the substrate binding site. N-linked (GlcNAc...) asparagine glycans are attached at residues Asn192, Asn233, and Asn245. Arg272 is a binding site for substrate. 2 N-linked (GlcNAc...) asparagine glycosylation sites follow: Asn289 and Asn307. Substrate is bound by residues Glu412 and Tyr451.

Belongs to the oxygen-dependent FAD-linked oxidoreductase family. FAD serves as cofactor. In terms of processing, the FAD cofactor is bound via a bicovalent 6-S-cysteinyl, 8alpha-N1-histidyl FAD linkage.

It is found in the secreted. The enzyme catalyses D-xylobiose + O2 = D-xylobiono-1,5-lactone + H2O2. The catalysed reaction is D-xylotriose + O2 = D-xylotriono-1,5-lactone + H2O2. It carries out the reaction D-xylotetraose + O2 = D-xylotetraono-1,5-lactone + H2O2. Catalyzes the selective oxidation of C1 hydroxyl moieties on mono-, oligo- and polysaccharides with concomitant reduction of molecular oxygen to hydrogen peroxide. This results in the formation of the corresponding lactones, which typically undergo spontaneous hydrolysis. Xylooligosaccharide oxidase is able to oxidize a variety of substrates including D-xylose, D-cellobiose, lactose and arabinose. The enzyme acts primarily on xylooligosaccharides, indicating that it prefers pentose-based oligosaccharides over hexose-based oligosaccharides. This chain is Xylooligosaccharide oxidase, found in Thermothelomyces thermophilus (strain ATCC 42464 / BCRC 31852 / DSM 1799) (Sporotrichum thermophile).